A 115-amino-acid polypeptide reads, in one-letter code: NAD(P)H-quinone oxidoreductase subunit M (115 aa).

This sequence belongs to the complex I NdhM subunit family. In terms of assembly, NDH-1 can be composed of about 15 different subunits; different subcomplexes with different compositions have been identified which probably have different functions.

Its subcellular location is the cellular thylakoid membrane. The enzyme catalyses a plastoquinone + NADH + (n+1) H(+)(in) = a plastoquinol + NAD(+) + n H(+)(out). It carries out the reaction a plastoquinone + NADPH + (n+1) H(+)(in) = a plastoquinol + NADP(+) + n H(+)(out). In terms of biological role, NDH-1 shuttles electrons from an unknown electron donor, via FMN and iron-sulfur (Fe-S) centers, to quinones in the respiratory and/or the photosynthetic chain. The immediate electron acceptor for the enzyme in this species is believed to be plastoquinone. Couples the redox reaction to proton translocation, and thus conserves the redox energy in a proton gradient. Cyanobacterial NDH-1 also plays a role in inorganic carbon-concentration. The sequence is that of NAD(P)H-quinone oxidoreductase subunit M from Parasynechococcus marenigrum (strain WH8102).